The following is a 190-amino-acid chain: ATP synthase subunit b (190 aa).

A helical transmembrane segment spans residues 4–24 (ILAPVLSLVLIAGVASPALAA).

Belongs to the ATPase B chain family. As to quaternary structure, F-type ATPases have 2 components, F(1) - the catalytic core - and F(0) - the membrane proton channel. F(1) has five subunits: alpha(3), beta(3), gamma(1), delta(1), epsilon(1). F(0) has three main subunits: a(1), b(2) and c(10-14). The alpha and beta chains form an alternating ring which encloses part of the gamma chain. F(1) is attached to F(0) by a central stalk formed by the gamma and epsilon chains, while a peripheral stalk is formed by the delta and b chains.

The protein localises to the cell inner membrane. In terms of biological role, f(1)F(0) ATP synthase produces ATP from ADP in the presence of a proton or sodium gradient. F-type ATPases consist of two structural domains, F(1) containing the extramembraneous catalytic core and F(0) containing the membrane proton channel, linked together by a central stalk and a peripheral stalk. During catalysis, ATP synthesis in the catalytic domain of F(1) is coupled via a rotary mechanism of the central stalk subunits to proton translocation. Its function is as follows. Component of the F(0) channel, it forms part of the peripheral stalk, linking F(1) to F(0). This is ATP synthase subunit b from Ruegeria pomeroyi (strain ATCC 700808 / DSM 15171 / DSS-3) (Silicibacter pomeroyi).